A 254-amino-acid chain; its full sequence is 5'-nucleotidase SurE (254 aa).

Positions 8, 9, 39, and 97 each coordinate a divalent metal cation.

Belongs to the SurE nucleotidase family. A divalent metal cation is required as a cofactor.

The protein resides in the cytoplasm. It carries out the reaction a ribonucleoside 5'-phosphate + H2O = a ribonucleoside + phosphate. Its function is as follows. Nucleotidase that shows phosphatase activity on nucleoside 5'-monophosphates. The sequence is that of 5'-nucleotidase SurE from Alkaliphilus metalliredigens (strain QYMF).